Consider the following 272-residue polypeptide: MLLLFTVVTLVSAAQVAPVTPQAAVPTQFLPGAQQKIGGVDNRCANKQVEGVQIFQGDMADCPKRNSEAANAMVQRAKQKALEIYNKEISKGPTPKDSGQCIERAVQGTDRCILAKIIDKAVNMLKYRISKVGNATALFRGNKLISLILNVDYGLKPFFTVVKKKTKRVFPQGDELNFNGIGQLIGVKGTFPQDNNDECKPCDSPKKTVETVAEECNLGCQLKGTPGLISRAIQKKEVKESSKDGEKSSTQNGEGTTDDEDGQQSPDGNGPE.

A signal peptide spans 1 to 21 (MLLLFTVVTLVSAAQVAPVTP). An N-linked (GlcNAc...) asparagine glycan is attached at Asn-134. Residues 231–272 (RAIQKKEVKESSKDGEKSSTQNGEGTTDDEDGQQSPDGNGPE) form a disordered region. Over residues 234–247 (QKKEVKESSKDGEK) the composition is skewed to basic and acidic residues. The segment covering 263-272 (QQSPDGNGPE) has biased composition (polar residues).

Its subcellular location is the spore polar tube. Functionally, involved in formation of a polar tube through which the infectious agent is passed on to the host cell. This Encephalitozoon hellem (Microsporidian parasite) protein is Polar tube protein 2 (PTP2).